Here is a 236-residue protein sequence, read N- to C-terminus: LexA repressor (236 aa).

A DNA-binding region (H-T-H motif) is located at residues 26 to 46; sequence FDEMKEALDLASKSGIHRLIT. The interval 84 to 107 is disordered; that stretch reads SPSVIEGGQGRSSPAPRPAANNDD. Catalysis depends on for autocatalytic cleavage activity residues S157 and K195.

This sequence belongs to the peptidase S24 family. As to quaternary structure, homodimer.

It carries out the reaction Hydrolysis of Ala-|-Gly bond in repressor LexA.. Functionally, represses a number of genes involved in the response to DNA damage (SOS response), including recA and lexA. In the presence of single-stranded DNA, RecA interacts with LexA causing an autocatalytic cleavage which disrupts the DNA-binding part of LexA, leading to derepression of the SOS regulon and eventually DNA repair. The chain is LexA repressor from Chelativorans sp. (strain BNC1).